A 338-amino-acid polypeptide reads, in one-letter code: Aspartate carbamoyltransferase catalytic subunit (338 aa).

The carbamoyl phosphate site is built by Arg71 and Thr72. Lys99 is a binding site for L-aspartate. Positions 121, 151, and 154 each coordinate carbamoyl phosphate. L-aspartate is bound by residues Arg184 and Arg239. The carbamoyl phosphate site is built by Gly280 and Pro281.

It belongs to the aspartate/ornithine carbamoyltransferase superfamily. ATCase family. Heterododecamer (2C3:3R2) of six catalytic PyrB chains organized as two trimers (C3), and six regulatory PyrI chains organized as three dimers (R2).

It carries out the reaction carbamoyl phosphate + L-aspartate = N-carbamoyl-L-aspartate + phosphate + H(+). The protein operates within pyrimidine metabolism; UMP biosynthesis via de novo pathway; (S)-dihydroorotate from bicarbonate: step 2/3. Functionally, catalyzes the condensation of carbamoyl phosphate and aspartate to form carbamoyl aspartate and inorganic phosphate, the committed step in the de novo pyrimidine nucleotide biosynthesis pathway. The protein is Aspartate carbamoyltransferase catalytic subunit of Stutzerimonas stutzeri (strain A1501) (Pseudomonas stutzeri).